A 445-amino-acid chain; its full sequence is Xylose isomerase (445 aa).

Catalysis depends on residues H107 and D110. Mg(2+) is bound by residues E238, E274, H277, D302, D313, D315, and D345.

The protein belongs to the xylose isomerase family. As to quaternary structure, homotetramer. Requires Mg(2+) as cofactor.

The protein localises to the cytoplasm. The enzyme catalyses alpha-D-xylose = alpha-D-xylulofuranose. The chain is Xylose isomerase from Bacillus pumilus (strain SAFR-032).